The following is an 848-amino-acid chain: ATP-dependent RNA helicase dbp10 (848 aa).

The segment at 22 to 43 is disordered; the sequence is DIATDNQKDKHENVGENVSDED. Positions 69–97 match the Q motif motif; it reads SNFQSMGLNQTLLRAIFKKGFKAPTPIQR. Residues 100 to 272 form the Helicase ATP-binding domain; it reads IPLLLEGRDV…KAGLQDPVLV (173 aa). 113–120 provides a ligand contact to ATP; sequence ARTGSGKT. The DEAD box signature appears at 220-223; it reads DEAD. The Helicase C-terminal domain occupies 330 to 480; sequence RKRALELALK…TSSKQVKTDS (151 aa). Residues 610-650 form a disordered region; that stretch reads NKVKPKGIKSEVASDKITDSSPGNMSEASESELEEVFKNPK. The span at 617–627 shows a compositional bias: basic and acidic residues; the sequence is IKSEVASDKIT. The segment covering 628–637 has biased composition (polar residues); it reads DSSPGNMSEA. 3 positions are modified to phosphoserine: S638, S733, and S736. The disordered stretch occupies residues 768–813; that stretch reads ANDSPIRENKRYKHNKLQTPKPADKFRDNYHKQNKRNREAKERGIG. Residues 789–812 are compositionally biased toward basic and acidic residues; the sequence is PADKFRDNYHKQNKRNREAKERGI.

It belongs to the DEAD box helicase family. DDX54/DBP10 subfamily.

The protein resides in the nucleus. The protein localises to the nucleolus. The enzyme catalyses ATP + H2O = ADP + phosphate + H(+). ATP-binding RNA helicase involved in the biogenesis of 60S ribosomal subunits and is required for the normal formation of 25S and 5.8S rRNAs. This Schizosaccharomyces pombe (strain 972 / ATCC 24843) (Fission yeast) protein is ATP-dependent RNA helicase dbp10 (dbp10).